Reading from the N-terminus, the 746-residue chain is NAD(P)H-quinone oxidoreductase subunit 5, chloroplastic (746 aa).

Transmembrane regions (helical) follow at residues 9 to 29 (WMIP…LLLF), 40 to 60 (WAFL…DLSI), 89 to 109 (IDPL…LVLI), 125 to 145 (FAYM…SNLI), 147 to 167 (VYIF…FWFT), 185 to 205 (GDFG…SFEF), 219 to 239 (NQVH…GPVA), 258 to 278 (TPIS…FLVA), 280 to 300 (LLPL…IGII), 327 to 347 (LGYM…FHLI), 354 to 374 (ALLF…VGYS), 396 to 416 (TTFL…CFWS), 425 to 445 (WLYS…TAFY), 546 to 566 (ILFP…IGIP), 607 to 627 (FSVS…KPAY), and 723 to 743 (LLLY…LNLL).

Belongs to the complex I subunit 5 family. As to quaternary structure, NDH is composed of at least 16 different subunits, 5 of which are encoded in the nucleus.

It localises to the plastid. The protein localises to the chloroplast thylakoid membrane. The enzyme catalyses a plastoquinone + NADH + (n+1) H(+)(in) = a plastoquinol + NAD(+) + n H(+)(out). It catalyses the reaction a plastoquinone + NADPH + (n+1) H(+)(in) = a plastoquinol + NADP(+) + n H(+)(out). Functionally, NDH shuttles electrons from NAD(P)H:plastoquinone, via FMN and iron-sulfur (Fe-S) centers, to quinones in the photosynthetic chain and possibly in a chloroplast respiratory chain. The immediate electron acceptor for the enzyme in this species is believed to be plastoquinone. Couples the redox reaction to proton translocation, and thus conserves the redox energy in a proton gradient. This chain is NAD(P)H-quinone oxidoreductase subunit 5, chloroplastic (ndhF), found in Carica papaya (Papaya).